The sequence spans 1007 residues: Exportin-7 (1007 aa).

It belongs to the exportin family.

It localises to the nucleus. It is found in the cytoplasm. The protein localises to the nuclear pore complex. In terms of biological role, mediates the nuclear export of proteins (cargos) with broad substrate specificity. This is Exportin-7 (xpo7) from Dictyostelium discoideum (Social amoeba).